Consider the following 340-residue polypeptide: Ephrin-B3 (340 aa).

A signal peptide spans 1 to 27 (MGAPHFGPGGVQVGALLLLGFAGLVSG). In terms of domain architecture, Ephrin RBD spans 28 to 167 (LSLEPVYWNS…TRGMKVLLRV (140 aa)). Topologically, residues 28 to 227 (LSLEPVYWNS…GPLPPPSMPA (200 aa)) are extracellular. 2 disulfide bridges follow: Cys-62/Cys-104 and Cys-92/Cys-156. The disordered stretch occupies residues 168 to 227 (GQSPRGGAVPRKPVSEMPMERDRGAAHSAEPGRDTIPGDPSSNATSRGAEGPLPPPSMPA). Over residues 185-200 (PMERDRGAAHSAEPGR) the composition is skewed to basic and acidic residues. A glycan (N-linked (GlcNAc...) asparagine) is linked at Asn-210. The chain crosses the membrane as a helical span at residues 228–248 (VAGAAGGMALLLLGVAGAGGA). At 249 to 340 (MCWRRRRAKP…QSPPNIYYKV (92 aa)) the chain is on the cytoplasmic side. Residues 254-300 (RRAKPSESRHPGPGSFGRGGSLGLGGGGGMGPREAEPGELGIALRGG) are disordered. Gly residues predominate over residues 267–284 (GSFGRGGSLGLGGGGGMG). Omega-N-methylarginine is present on Arg-271. Ser-274 is subject to Phosphoserine. The PDZ-binding signature appears at 338–340 (YKV).

This sequence belongs to the ephrin family. In terms of assembly, interacts with GRIP1 and GRIP2. Expressed on lateral floor plate cells, specifically on commissural axon segments that have passed through the floor plate. Expressed in cells of the retinal ganglion cell layer during retinal axon guidance to the optic disk. Expressed in myogenic progenitor cells.

Its subcellular location is the membrane. In terms of biological role, cell surface transmembrane ligand for Eph receptors, a family of receptor tyrosine kinases which are crucial for migration, repulsion and adhesion during neuronal, vascular and epithelial development. Binds promiscuously Eph receptors residing on adjacent cells, leading to contact-dependent bidirectional signaling into neighboring cells. The signaling pathway downstream of the receptor is referred to as forward signaling while the signaling pathway downstream of the ephrin ligand is referred to as reverse signaling. May play a pivotal role in forebrain function. Binds to, and induce the collapse of, commissural axons/growth cones in vitro. May play a role in constraining the orientation of longitudinally projecting axons. This chain is Ephrin-B3 (Efnb3), found in Mus musculus (Mouse).